Reading from the N-terminus, the 321-residue chain is uncharacterized protein (321 aa).

Positions 1–56 (MANIKDIAEKAGVSVTTVSRVINNHPYVSEDKRKRVFEAMESLEYTRNIHAVHLSK) constitute an HTH lacI-type domain. A DNA-binding region (H-T-H motif) is located at residues 4–23 (IKDIAEKAGVSVTTVSRVIN).

This is an uncharacterized protein from Bacillus subtilis (strain 168).